The primary structure comprises 62 residues: MARRCTLTFKGSMIGNHVSHANNKNKRRLLPNLRSIKIQLDDGTTRRIKVAASTLRTMRKGA.

It belongs to the bacterial ribosomal protein bL28 family.

The protein is Large ribosomal subunit protein bL28 of Helicobacter acinonychis (strain Sheeba).